A 779-amino-acid chain; its full sequence is Pleckstrin homology domain-containing family A member 4 (779 aa).

One can recognise a PH domain in the interval 54 to 153; it reads PVHIRGWLHK…WLRALGRASR (100 aa). Disordered stretches follow at residues 152-352, 492-670, and 691-764; these read SRAE…LPGP, AGLG…EGHR, and MTGG…LPQD. The residue at position 164 (Ser164) is a Phosphoserine. Residues 184 to 193 show a composition bias toward basic and acidic residues; sequence SRGEEGRISE. Polar residues predominate over residues 315–332; the sequence is QHWSQEPRTQAHSGSPTY. Residues 525-535 are compositionally biased toward low complexity; that stretch reads PESLELSSPRS. A compositionally biased stretch (basic and acidic residues) spans 536–551; it reads PETDWGRPPGGDKDLA. A Phosphoserine modification is found at Ser559. Positions 594–603 are enriched in basic and acidic residues; that stretch reads QLERMRRNQE. A compositionally biased stretch (polar residues) spans 647–663; sequence LRSSGSWSSPRNTTPYL. A compositionally biased stretch (pro residues) spans 704-724; the sequence is PGVPLPPSDPTRQETPPPRSP.

Highly expressed in melanoma. Detected at low levels in heart, skeletal muscle, kidney, liver and small intestine.

The protein localises to the cytoplasm. It is found in the membrane. Its function is as follows. Binds specifically to phosphatidylinositol 3-phosphate (PtdIns3P), but not to other phosphoinositides. The protein is Pleckstrin homology domain-containing family A member 4 (PLEKHA4) of Homo sapiens (Human).